We begin with the raw amino-acid sequence, 963 residues long: MASTTVAQLAAELSRSAAALLEQLQAAGVGKATPEDIITESDKTRLLDYLKRSHGQADDSARKKITLTKRETSEIRQSDATGKTRTVQVEVRKKRVLIKRDDAAPEHQADGAEAQAHVVDAAEEARREEEERRQAEQLARQEAEAKAAREAAEREEAERRARQEALEAEQRRQAELAARKAEEEAAASRAVTEANEDTSRKKAEDEKARVAAERAEAQKAADEAKAAADKARAEQEIAARKRREAAEAEARAIQQMLNAPARVLKAPSERKAEEKKAEQTGTLHKPVKPAGTEAKPGEKKPVTATATTTTDKKGKVVKAGTSSTWQDEGSRKKGSGLKTRGDSSGGVGGWRGGPRGRGGRQQQHDDSRSNFQAPTEPVVREVHVPETISVADLAHKMAVKASEVIKQMMKLGQMVTINQVLDQETAMIVVEEMGHKAYAAKLDDPEALLVVDGEEHEDAELLPRPPVVTVMGHVDHGKTSLLDYIRRTKVAAGEAGGITQHIGAYHVETDRGVITFLDTPGHEAFTAMRARGAKATDIVILVVAADDGVMPQTKEAIAHAKAAGVPIVVAINKVDKPEANPDRVKQELVAEQVVPEEYGGDSPFVPVSAKTGAGIEDLLEQVSLQAEVLELKAPVDAPAKGLVVEAQLDKGKGPIATILVSSGTLKRGDVVLAGSAYGRVRAMLDENGKATKEAGPSIPVEIQGLSEVPAAGEEVLVLPDERKAREIALFRQGKFRDVKLAKQQAAKLENMLEQMTEGEVQTLPLIVKADVQGSQEALVQSLQKLSTAEVRVQIVHGGVGGISESDVNLATASKAVIIGFNVRADAGARKLAEHNGIDIRYYNIIYDAVDEIKAAMSGMLAPEKRETTTGTVEVRQVFRVPKVGAVAGCMVTDGVVKRNSLVRVLRNNVVIHDGELDSLKRFKDDVKEVKQGFECGLSIKNFNDVQEGDQLEVYEITEVARTL.

Positions 53 to 77 are enriched in basic and acidic residues; it reads SHGQADDSARKKITLTKRETSEIRQ. The disordered stretch occupies residues 53–377; sequence SHGQADDSAR…RSNFQAPTEP (325 aa). Residues 78-87 show a composition bias toward polar residues; the sequence is SDATGKTRTV. 4 stretches are compositionally biased toward basic and acidic residues: residues 98–110, 123–183, 197–250, and 267–278; these read IKRD…HQAD, EEAR…KAEE, DTSR…EAEA, and PSERKAEEKKAE. The segment covering 343–356 has biased composition (gly residues); sequence SSGGVGGWRGGPRG. Positions 463-632 constitute a tr-type G domain; it reads PRPPVVTVMG…SLQAEVLELK (170 aa). Positions 472-479 are G1; it reads GHVDHGKT. 472-479 contributes to the GTP binding site; that stretch reads GHVDHGKT. Residues 497 to 501 form a G2 region; it reads GITQH. The interval 518-521 is G3; sequence DTPG. GTP is bound by residues 518–522 and 572–575; these read DTPGH and NKVD. The tract at residues 572–575 is G4; it reads NKVD. A G5 region spans residues 608–610; sequence SAK.

The protein belongs to the TRAFAC class translation factor GTPase superfamily. Classic translation factor GTPase family. IF-2 subfamily.

The protein localises to the cytoplasm. Its function is as follows. One of the essential components for the initiation of protein synthesis. Protects formylmethionyl-tRNA from spontaneous hydrolysis and promotes its binding to the 30S ribosomal subunits. Also involved in the hydrolysis of GTP during the formation of the 70S ribosomal complex. This Cupriavidus taiwanensis (strain DSM 17343 / BCRC 17206 / CCUG 44338 / CIP 107171 / LMG 19424 / R1) (Ralstonia taiwanensis (strain LMG 19424)) protein is Translation initiation factor IF-2.